The chain runs to 142 residues: gSG7 salivary protein (142 aa).

The first 26 residues, 1 to 26 (MAARMTIMLPLAVALICLLQTEPGMA), serve as a signal peptide directing secretion. Disulfide bonds link cysteine 84/cysteine 139 and cysteine 107/cysteine 117.

It localises to the secreted. Salivary protein that moderately inhibits the alternative pathway for complement system activation in the host. This chain is gSG7 salivary protein, found in Anopheles darlingi (Mosquito).